A 258-amino-acid polypeptide reads, in one-letter code: Ferredoxin--NADP reductase (258 aa).

Residues 2–102 form the FAD-binding FR-type domain; sequence SNLYTERVLS…RKPTGTLVHD (101 aa). FAD-binding residues include arginine 51, alanine 52, tyrosine 53, serine 54, phenylalanine 67, isoleucine 69, leucine 76, threonine 77, and threonine 117. Residues valine 144, arginine 145, threonine 181, arginine 182, arginine 190, serine 223, glutamate 227, phenylalanine 255, and glutamate 257 each coordinate NADP(+). FAD-binding residues include phenylalanine 255, glutamate 257, and lysine 258.

Belongs to the ferredoxin--NADP reductase type 1 family. Monomer. Requires FAD as cofactor.

The enzyme catalyses 2 reduced [2Fe-2S]-[ferredoxin] + NADP(+) + H(+) = 2 oxidized [2Fe-2S]-[ferredoxin] + NADPH. Functionally, transports electrons between ferredoxin and NADPH. Provides electrons to heme oxygenase (pigA) allowing anaerobic heme degradation. Provides electrons necessary to reduce and mobilize Fe(3+) in a heterooligomeric bacterioferritin (BFR) complex to Fe(2+). Reduction of Fe(3+) in a pure FtnA BFR does not require Bfd. Reduction of Fe(3+) in a pure BfrB BFR does require Bfd. This is Ferredoxin--NADP reductase from Pseudomonas aeruginosa (strain ATCC 15692 / DSM 22644 / CIP 104116 / JCM 14847 / LMG 12228 / 1C / PRS 101 / PAO1).